Here is a 1048-residue protein sequence, read N- to C-terminus: Copper-dependent transcription factor 1 (1048 aa).

Residues 1–40 constitute a DNA-binding region (copper-fist); the sequence is MVLINDKKFACEKCIKGHRVSACTHTDRPLFEVKKKGRPS. 4 residues coordinate Zn(2+): cysteine 11, cysteine 14, cysteine 23, and histidine 25. Residues 85–99 are compositionally biased toward low complexity; that stretch reads ANESGGASATANTSA. 2 disordered regions span residues 85 to 117 and 178 to 273; these read ANESGGASATANTSAEPEIETRKGQPGSKPTFP and HSGH…RPPV. A compositionally biased stretch (polar residues) spans 211-222; the sequence is TRNSPTSINSSE. The short motif at 348-362 is the CRM-I element; sequence CMCGDDCSCPGCATH. A CRM-II motif is present at residues 455-482; the sequence is CCGGKCGCPPGECACTKQCCGCCGECTC. Disordered stretches follow at residues 506-702 and 835-876; these read SSCG…PLNS and GPSG…WKFP. 5 stretches are compositionally biased toward polar residues: residues 527 to 536, 550 to 565, 629 to 645, 664 to 682, and 692 to 702; these read QIPQSVSPTS, PVSTIHHSTLSPSFNT, GSMTATKRSGTSTGVRR, SIQSSSDRSFYIGSPSNQI, and APSQMTAPLNS. Positions 835–845 are enriched in low complexity; it reads GPSGPSAIPAT. Over residues 846–868 the composition is skewed to polar residues; the sequence is NIPSRHTTPQASRPLTPPESSFT.

Its subcellular location is the nucleus. It is found in the cytoplasm. The protein localises to the cell cortex. Its function is as follows. Transcription factor that regulates copper acquisition and homeostasis, and which plays a central role in fungal pathogenesis during neurologic infection. The transcriptional regulation exerted by CUF1 is intrinsically complex since it acts as a dual sensor of copper levels, responsible for expression of a set of copper-specific copper transporters, CTR1 and CTR4, at low copper concentrations, and 2 metallothioneins, CMT1 and CMT2, at high copper concentrations. Positively regulates the expression of the copper acquisition factor BIM1 under copper-limiting conditions. Also positively regulates the expression of super oxide dismutase SOD2 isoform 2 during oxidative stress and copper-limiting conditions. Negatively regulates the expression of super oxide dismutase SOD1 during copper-limiting conditions. Also regulates ATM1, an ABC transporter with functions in the iron-sulfur clusters (ISC) export machinery, during copper stress. Another target of CUF1 is the gene encoding the laccase LAC1. Binds promoters of target genes at Cu-responsive elements (CuREs) that contain a variable A/T rich 5' region followed by the core consensus sequence 5'-G(G/C)CTC(A/G)-3'. Negatively regulates capsule biosynthesis, probably via modulating iron acquisition through the high-affinity iron uptake pathway. This Cryptococcus neoformans var. grubii serotype A (strain H99 / ATCC 208821 / CBS 10515 / FGSC 9487) (Filobasidiella neoformans var. grubii) protein is Copper-dependent transcription factor 1.